We begin with the raw amino-acid sequence, 399 residues long: Mannan endo-1,4-beta-mannosidase 4 (399 aa).

Residues 1–26 (MNNSIILIFVAILIIFPNEFSKPTRA) form the signal peptide. Positions 88 and 203 each coordinate substrate. E204 (proton donor) is an active-site residue. Residue Y279 coordinates substrate. E318 (nucleophile) is an active-site residue. A disulfide bridge links C347 with C354. Position 360 (W360) interacts with substrate.

The protein belongs to the glycosyl hydrolase 5 (cellulase A) family. In terms of tissue distribution, expressed in flowers and fruit pericarp.

The protein resides in the secreted. It catalyses the reaction Random hydrolysis of (1-&gt;4)-beta-D-mannosidic linkages in mannans, galactomannans and glucomannans.. Its function is as follows. Possesses endo-beta-mannanase and mannan transglycosylase activities. May be involved in cell wall degradation during fruit ripening. The chain is Mannan endo-1,4-beta-mannosidase 4 (MAN4) from Solanum lycopersicum (Tomato).